The primary structure comprises 172 residues: Conglutin-7 (172 aa).

An N-terminal signal peptide occupies residues 1 to 21 (MAKLTILVALALFLLAAHASA). 4 disulfides stabilise this stretch: Cys-33–Cys-116, Cys-45–Cys-103, Cys-104–Cys-152, and Cys-118–Cys-160. The segment at 54–98 (QRDEDSYGRDPYSPSQDPYSPSQDPDRRDPYSPSPYDRRGAGSSQ) is disordered. The span at 62–76 (RDPYSPSQDPYSPSQ) shows a compositional bias: low complexity. 4-hydroxyproline occurs at positions 67, 74, and 86. A compositionally biased stretch (basic and acidic residues) spans 77–98 (DPDRRDPYSPSPYDRRGAGSSQ).

Belongs to the 2S seed storage albumins family. In terms of processing, the hydroxyproline modifications determined by mass spectrometry are probably 4-hydroxyproline as determined for other extracellular plant proteins. Expressed in seeds, not expressed in leaves, roots and pegs.

In terms of biological role, weak inhibitor of trypsin. This Arachis hypogaea (Peanut) protein is Conglutin-7.